The sequence spans 197 residues: Imidazoleglycerol-phosphate dehydratase (197 aa).

It belongs to the imidazoleglycerol-phosphate dehydratase family.

It localises to the cytoplasm. It catalyses the reaction D-erythro-1-(imidazol-4-yl)glycerol 3-phosphate = 3-(imidazol-4-yl)-2-oxopropyl phosphate + H2O. Its pathway is amino-acid biosynthesis; L-histidine biosynthesis; L-histidine from 5-phospho-alpha-D-ribose 1-diphosphate: step 6/9. The polypeptide is Imidazoleglycerol-phosphate dehydratase (Syntrophomonas wolfei subsp. wolfei (strain DSM 2245B / Goettingen)).